A 106-amino-acid chain; its full sequence is MTLYYIGILVVIIGLFSIFSGIIGFFRFPDFYTKLHAASVIESFAVPICLIGFACIELDMLNSIKLILAALLILLLNPVATHALGKASLLMKIRTYNTVLLKKIRK.

The protein belongs to the UPF0091 family.

This is UPF0091 protein RP266 from Rickettsia prowazekii (strain Madrid E).